A 231-amino-acid chain; its full sequence is Endonuclease NucS (231 aa).

This sequence belongs to the NucS endonuclease family.

The protein localises to the cytoplasm. Its function is as follows. Cleaves both 3' and 5' ssDNA extremities of branched DNA structures. This chain is Endonuclease NucS, found in Beutenbergia cavernae (strain ATCC BAA-8 / DSM 12333 / CCUG 43141 / JCM 11478 / NBRC 16432 / NCIMB 13614 / HKI 0122).